A 661-amino-acid polypeptide reads, in one-letter code: CD180 antigen (661 aa).

Positions 1–23 are cleaved as a signal peptide; sequence MAFDVSCFFWVVLFSAGCKVITS. Over 24–626 the chain is Extracellular; it reads WDQMCIEKEA…KLSDVKLSCG (603 aa). One can recognise an LRRNT domain in the interval 33-53; the sequence is ANKTYNCENLGLSEIPDTLPN. N34, N53, N70, and N78 each carry an N-linked (GlcNAc...) asparagine glycan. LRR repeat units follow at residues 54–75, 78–99, 102–123, 126–147, 150–171, 174–195, and 201–221; these read TTEFLEFSFNFLPTIHNRTFSR, NLTFLDLTRCQINWIHEDTFQS, QLSTLVLTGNPLIFMAETSLNG, SLKHLFLIQTGISNLEFIPVHN, NLESLYLGSNHISSIKFPKDFP, NLKVLDFQNNAIHYISREDMRS, and NLSLNFNGNNVKGIELGAFDS. 3 N-linked (GlcNAc...) asparagine glycosylation sites follow: N201, N234, and N244. 5 LRR repeats span residues 275-296, 299-320, 322-343, 346-366, and 371-391; these read SVESLNLQEHRFSDISSTTFQC, QLQELDLTATHLKGLPSGMKGL, LLKKLVLSVNHFDQLCQISAAN, SLTHLYIRGNVKKLHLGVGCL, and NLQTLDLSHNDIEASDCCSLQ. N-linked (GlcNAc...) asparagine glycans are attached at residues N394 and N402. LRR repeat units follow at residues 397–418, 421–442, 446–466, 470–493, 497–518, 521–544, and 546–564; these read HLQTLNLSHNEPLGLQSQAFKE, QLELLDLAFTRLHINAPQSPFQ, FLQVLNLTYCFLDTSNQHLLA, VLRHLNLKGNHFQDGTITKTNLLQ, SLEVLILSSCGLLSIDQQAFHS, KMSHVDLSHNSLTCDSIDSLSHLK, and IYLNLAANSINIISPRLLP. The N-linked (GlcNAc...) asparagine glycan is linked to N451. The N-linked (GlcNAc...) asparagine glycan is linked to N573. The region spanning 577–627 is the LRRCT domain; sequence NPLDCTCSNIHFLTWYKENLHKLEGSEETTCANPPSLRGVKLSDVKLSCGI. The chain crosses the membrane as a helical span at residues 627 to 650; sequence ITAIGIFFLIVFLLLLAILLFFAV. Over 651–661 the chain is Cytoplasmic; it reads KYLLRWKYQHI.

This sequence belongs to the Toll-like receptor family. M-shaped tetramer of two CD180-LY86 heterodimers. As to expression, expressed mainly on mature peripherical B cells. Detected in spleen, lymph node and appendix. Not detected in pre-B and -T cells.

It is found in the cell membrane. Functionally, may cooperate with MD-1 and TLR4 to mediate the innate immune response to bacterial lipopolysaccharide (LPS) in B-cells. Leads to NF-kappa-B activation. Also involved in the life/death decision of B-cells. The chain is CD180 antigen (CD180) from Homo sapiens (Human).